We begin with the raw amino-acid sequence, 168 residues long: Oleosin 18.2 kDa (168 aa).

At A2 the chain carries N-acetylalanine. The tract at residues 2–45 (AEVRDRNLPHQVQVHPQYRLDNTTGGGYGAKNYHSGPSTSQVLA) is polar. Helical transmembrane passes span 43–63 (VLAV…AGLT), 76–96 (PLFI…AMAV), and 97–117 (TGFL…SYVL). The segment at 46–117 (VLTLLPIGGT…TGLSSLSYVL (72 aa)) is hydrophobic.

The protein belongs to the oleosin family.

It is found in the lipid droplet. It localises to the membrane. Its function is as follows. May have a structural role to stabilize the lipid body during desiccation of the seed by preventing coalescence of the oil. Probably interacts with both lipid and phospholipid moieties of lipid bodies. May also provide recognition signals for specific lipase anchorage in lipolysis during seedling growth. This chain is Oleosin 18.2 kDa (MATP6-A), found in Gossypium hirsutum (Upland cotton).